A 1463-amino-acid polypeptide reads, in one-letter code: DNA polymerase III PolC-type (1463 aa).

In terms of domain architecture, Exonuclease spans 425 to 581; it reads YVVFDVETTG…YDAEATGRLL (157 aa).

The protein belongs to the DNA polymerase type-C family. PolC subfamily.

It localises to the cytoplasm. The catalysed reaction is DNA(n) + a 2'-deoxyribonucleoside 5'-triphosphate = DNA(n+1) + diphosphate. Its function is as follows. Required for replicative DNA synthesis. This DNA polymerase also exhibits 3' to 5' exonuclease activity. This is DNA polymerase III PolC-type from Streptococcus pneumoniae serotype 2 (strain D39 / NCTC 7466).